The following is a 29-amino-acid chain: Cyclotide vibi-A (29 aa).

The segment at residues 1–29 (GLPVCGETCFGGTCNTPGCSCSYPICTRN) is a cross-link (cyclopeptide (Gly-Asn)). 3 disulfide bridges follow: cysteine 5/cysteine 19, cysteine 9/cysteine 21, and cysteine 14/cysteine 26.

In terms of processing, this is a cyclic peptide.

Its function is as follows. Probably participates in a plant defense mechanism. The sequence is that of Cyclotide vibi-A from Viola biflora (Yellow wood violet).